We begin with the raw amino-acid sequence, 342 residues long: Protein FDO1 (342 aa).

Disordered regions lie at residues 1-36 (MEENKLSGNKPIQLATWSNQMGSPENNGNNANNGSD), 57-76 (MSPMEEEHSQPSSSQETLSV), and 299-322 (GRTITHNRPNTKDESIQDSHGNRT). The span at 15–25 (ATWSNQMGSPE) shows a compositional bias: polar residues. Positions 308–319 (NTKDESIQDSHG) are enriched in basic and acidic residues.

Interacts with FKH1.

In concert with FKH1, plays a role in directionality of mating type switching by controlling which donor mating-type locus is inserted into MAT locus during mating type switching. This is Protein FDO1 from Saccharomyces cerevisiae (strain ATCC 204508 / S288c) (Baker's yeast).